A 194-amino-acid polypeptide reads, in one-letter code: Probable thymidylate kinase (194 aa).

ATP is bound at residue 7–14; it reads GIDGSGKT.

It belongs to the thymidylate kinase family.

The enzyme catalyses dTMP + ATP = dTDP + ADP. In Methanothermobacter thermautotrophicus (strain ATCC 29096 / DSM 1053 / JCM 10044 / NBRC 100330 / Delta H) (Methanobacterium thermoautotrophicum), this protein is Probable thymidylate kinase (tmk).